Here is a 336-residue protein sequence, read N- to C-terminus: Transmembrane protein 19 (336 aa).

The next 6 helical transmembrane spans lie at 19–39 (IVILCMILCISLSFWIISITA), 49–69 (ISPWRWLVSVLTPIIIVWHGI), 86–106 (GFILTIANYSFFSALLTFFFI), 224–244 (ISSLLGGTSVGVAYFVTQLIF), 250–270 (IAAPQWPIVIYGGMAGLLGSL), and 313–333 (VNLFSSILIALLLPTAAWSFW).

It belongs to the TMEM19 family.

The protein resides in the membrane. The protein is Transmembrane protein 19 (tmem19) of Xenopus tropicalis (Western clawed frog).